A 430-amino-acid polypeptide reads, in one-letter code: MTSVVVVGTQWGDEGKGKITDFLSANAEVIARYQGGDNAGHTIVIDGTKYKLHLIPSGIFFPEKISVIGNGVVVNPKSLVKEINYLHDSGVTTDNLRISDRAHVILPYHIKLDQLQEESKGENKIGTTNKGIGPAYMDKAARVGIRIADLLDKEIFAERLRTNLAEKNRLFEKMYESTPIEFDEIFEEYYAYGQEIKKYVTDTSVILNDALDQGKRVLFEGAQGVMLDIDQGTYPFVTSSNPVAGGVTIGSGVGPSKIDKVVGVCKAYTSRVGDGPFPTELHDEIGDRIREIGKEYGTTTGRPRRVGWFDSVVMRHSRRVSGITNLSLNSIDVLSGLGTLKICVAYDLDGERIDHYPASLEQLKRCKPIYEEMPGWSEDITGVRSLDELPEAARNYVRRISELVGVRISTFSVGPGREQTNILESVWSAK.

Residues Gly12–Lys18 and Gly40–Thr42 contribute to the GTP site. The active-site Proton acceptor is the Asp13. 2 residues coordinate Mg(2+): Asp13 and Gly40. Residues Asp13–Lys16, Asn38–His41, Thr128, Arg142, Gln223, Thr238, and Arg302 contribute to the IMP site. The Proton donor role is filled by His41. Position 298–304 (Thr298–Arg304) interacts with substrate. GTP-binding positions include Arg304, Ser330 to Asp332, and Ser412 to Gly414.

Belongs to the adenylosuccinate synthetase family. As to quaternary structure, homodimer. The cofactor is Mg(2+).

The protein resides in the cytoplasm. It carries out the reaction IMP + L-aspartate + GTP = N(6)-(1,2-dicarboxyethyl)-AMP + GDP + phosphate + 2 H(+). It participates in purine metabolism; AMP biosynthesis via de novo pathway; AMP from IMP: step 1/2. Plays an important role in the de novo pathway of purine nucleotide biosynthesis. Catalyzes the first committed step in the biosynthesis of AMP from IMP. The protein is Adenylosuccinate synthetase of Streptococcus suis (strain 98HAH33).